The sequence spans 249 residues: Glucosamine-6-phosphate deaminase (249 aa).

Asp-67 acts as the Proton acceptor; for enolization step in catalysis. The For ring-opening step role is filled by Asn-136. The active-site Proton acceptor; for ring-opening step is His-138. The For ring-opening step role is filled by Glu-143.

This sequence belongs to the glucosamine/galactosamine-6-phosphate isomerase family. NagB subfamily.

The catalysed reaction is alpha-D-glucosamine 6-phosphate + H2O = beta-D-fructose 6-phosphate + NH4(+). It participates in amino-sugar metabolism; N-acetylneuraminate degradation; D-fructose 6-phosphate from N-acetylneuraminate: step 5/5. Functionally, catalyzes the reversible isomerization-deamination of glucosamine 6-phosphate (GlcN6P) to form fructose 6-phosphate (Fru6P) and ammonium ion. In Clostridium botulinum (strain Eklund 17B / Type B), this protein is Glucosamine-6-phosphate deaminase.